The following is a 52-amino-acid chain: Ribosome modulation factor (52 aa).

This sequence belongs to the ribosome modulation factor family.

The protein resides in the cytoplasm. In terms of biological role, during stationary phase, converts 70S ribosomes to an inactive dimeric form (100S ribosomes). This is Ribosome modulation factor from Xenorhabdus nematophila (strain ATCC 19061 / DSM 3370 / CCUG 14189 / LMG 1036 / NCIMB 9965 / AN6).